The sequence spans 501 residues: Zinc finger C3HC-type protein 1 (501 aa).

The residue at position 2 (A2) is an N-acetylalanine. Positions 21–73 (VVRSPEGTPQKVRELIDEGIVPEEGGTEPKDTAATFQSVDGSPQAEQSPLEST) are disordered. The residue at position 24 (S24) is a Phosphoserine. The residue at position 28 (T28) is a Phosphothreonine. Positions 54–72 (ATFQSVDGSPQAEQSPLES) are enriched in polar residues. Phosphoserine is present on residues S58, S62, and S68. T84 is subject to Phosphothreonine. Residues 102 to 156 (CAKYGWVTVECDMLKCSSCQAFLCASLQPTFDFGRYKERCAELKKSLCSAHEKFC) form a C3HC-type zinc finger. The segment at 302–421 (SPIPGVEGRP…TSPRSFFDPT (120 aa)) is disordered. A phosphoserine mark is found at S320 and S328. Residues 326 to 338 (TRSQDATVSPGSE) show a composition bias toward polar residues. T332 is subject to Phosphothreonine. Phosphoserine is present on residues S334, S337, S343, S353, S358, S369, and S380. Polar residues-rich tracts occupy residues 350-359 (RTRSWESSSP) and 369-383 (SPTT…SMGT). Position 383 is a phosphothreonine (T383). S394 is modified (phosphoserine). A Nuclear localization signal motif is present at residues 395–401 (PLRRTKR). 2 positions are modified to phosphoserine: S406 and S482. A compositionally biased stretch (low complexity) spans 406 to 420 (SSSSSDTSPRSFFDP).

Interacts with TPR; this interaction mediates ZC3HC1 nuclear envelopes (NE)-association but also required for proper positioning of a substantial amount of TPR at the nuclear basket (NB). Phosphorylated. May also be weakly phosphorylated on Tyr residues.

It localises to the nucleus. The protein localises to the nucleus envelope. Its function is as follows. Required for proper positioning of a substantial amount of TPR at the nuclear basket (NB) through interaction with TPR. In Mus musculus (Mouse), this protein is Zinc finger C3HC-type protein 1 (Zc3hc1).